The sequence spans 167 residues: N-alpha-acetyltransferase (167 aa).

The N-acetyltransferase domain occupies 12–167 (FTLRNARMDD…EDAYLMARPL (156 aa)). Y37 contacts substrate. H88 lines the Zn(2+) pocket. Residues 92–94 (IAV) and 100–105 (RKGIAT) each bind acetyl-CoA. E127 is a binding site for Zn(2+). Residues N132 and 139–141 (YEK) contribute to the acetyl-CoA site. Position 154 (Y154) interacts with substrate.

Belongs to the acetyltransferase family. ARD1 subfamily. As to quaternary structure, homodimer.

It is found in the cytoplasm. The enzyme catalyses N-terminal L-alanyl-[protein] + acetyl-CoA = N-terminal N(alpha)-acetyl-L-alanyl-[protein] + CoA + H(+). The catalysed reaction is N-terminal L-seryl-[protein] + acetyl-CoA = N-terminal N(alpha)-acetyl-L-seryl-[protein] + CoA + H(+). It catalyses the reaction N-terminal L-methionyl-L-leucyl-[protein] + acetyl-CoA = N-terminal N(alpha)-acetyl-L-methionyl-L-leucyl-[protein] + CoA + H(+). It carries out the reaction N-terminal L-methionyl-L-glutamyl-[protein] + acetyl-CoA = N-terminal N(alpha)-acetyl-L-methionyl-L-glutamyl-[protein] + CoA + H(+). Displays alpha (N-terminal) acetyltransferase activity. Catalyzes the covalent attachment of an acetyl moiety from acetyl-CoA to the free alpha-amino group at the N-terminus of a protein. NAT is able to acetylate the alpha-amino group of methionine, alanine and serine N-terminal residue substrates, however it has a preference for Ser-N-terminal substrates. The sequence is that of N-alpha-acetyltransferase from Saccharolobus solfataricus (strain ATCC 35092 / DSM 1617 / JCM 11322 / P2) (Sulfolobus solfataricus).